Here is a 545-residue protein sequence, read N- to C-terminus: Chaperonin GroEL (545 aa).

ATP-binding positions include 29-32 (TIGP), 86-90 (DGTTT), Gly-413, 478-480 (NAA), and Asp-494.

It belongs to the chaperonin (HSP60) family. In terms of assembly, forms a cylinder of 14 subunits composed of two heptameric rings stacked back-to-back. Interacts with the co-chaperonin GroES.

It localises to the cytoplasm. It catalyses the reaction ATP + H2O + a folded polypeptide = ADP + phosphate + an unfolded polypeptide.. Its function is as follows. Together with its co-chaperonin GroES, plays an essential role in assisting protein folding. The GroEL-GroES system forms a nano-cage that allows encapsulation of the non-native substrate proteins and provides a physical environment optimized to promote and accelerate protein folding. This is Chaperonin GroEL from Exiguobacterium sibiricum (strain DSM 17290 / CCUG 55495 / CIP 109462 / JCM 13490 / 255-15).